The following is an 89-amino-acid chain: MSITPEEKARLMKEFATKEGDTGSPEVQVAILTSRISTLTEHFKSHKKDNHSRRGLLMMVAQRRKLLDYARAKDEGRYQDLIKRLGIRR.

It belongs to the universal ribosomal protein uS15 family. In terms of assembly, part of the 30S ribosomal subunit. Forms a bridge to the 50S subunit in the 70S ribosome, contacting the 23S rRNA.

Functionally, one of the primary rRNA binding proteins, it binds directly to 16S rRNA where it helps nucleate assembly of the platform of the 30S subunit by binding and bridging several RNA helices of the 16S rRNA. Its function is as follows. Forms an intersubunit bridge (bridge B4) with the 23S rRNA of the 50S subunit in the ribosome. In Jannaschia sp. (strain CCS1), this protein is Small ribosomal subunit protein uS15.